We begin with the raw amino-acid sequence, 101 residues long: Large ribosomal subunit protein bL28 (101 aa).

Belongs to the bacterial ribosomal protein bL28 family.

The protein is Large ribosomal subunit protein bL28 of Rhodopseudomonas palustris (strain BisB5).